Consider the following 229-residue polypeptide: Potassium/proton antiporter CemA (229 aa).

3 helical membrane passes run 6-26, 107-127, and 189-209; these read AFIP…ISLC, ILHF…SFWA, and ILSG…KYWI.

The protein belongs to the CemA family.

The protein resides in the plastid. The protein localises to the chloroplast inner membrane. The catalysed reaction is K(+)(in) + H(+)(out) = K(+)(out) + H(+)(in). In terms of biological role, contributes to K(+)/H(+) antiport activity by supporting proton efflux to control proton extrusion and homeostasis in chloroplasts in a light-dependent manner to modulate photosynthesis. Prevents excessive induction of non-photochemical quenching (NPQ) under continuous-light conditions. Indirectly promotes efficient inorganic carbon uptake into chloroplasts. The sequence is that of Potassium/proton antiporter CemA from Crucihimalaya wallichii (Rock-cress).